The primary structure comprises 538 residues: Putative outer membrane porin BglH (538 aa).

Residues 1 to 25 (MFRRNLITSAILLMAPLAFSAQSLA) form the signal peptide. The tract at residues 52-82 (KDEEKKKYTPATVNRSVSTNDQGYAANPFPT) is disordered. Over residues 62 to 73 (ATVNRSVSTNDQ) the composition is skewed to polar residues.

This sequence belongs to the porin LamB (TC 1.B.3) family.

Its subcellular location is the cell outer membrane. In terms of biological role, may be a sugar porin with a broad carbohydrate specificity. This Shigella sonnei (strain Ss046) protein is Putative outer membrane porin BglH (bglH).